A 349-amino-acid chain; its full sequence is MSDFQREQRKNEHVEIAMAQSDAPQSDFDRVRFVHHSIPSINVDEVDLTSRTTDFDMTYPIYINAMTGGSEWTKQINEKLAVVARETGLAMAVGSTHAALRNPKMAESFSIARQTNPEGIIFSNVGADVPVDKAVEAVSLLDAQALQIHVNAPQELVMPEGNREFSTWLDNVAAIVQRVDVPVIIKEVGFGMSKELYKDLIDVGVTYVDVSGKGGTNFVTIENERRSNKDMDYLANWGQSTVESLLESSAYQDSLNVFASGGVRTPLDVVKSLALGAKAVGMSRPFLNQVENGGITTTIEYVESFIEHTKSIMTMLNARDISELKQSKFVFDHKLMSWIEQRGLDIHRG.

Arg-9 to Lys-10 lines the substrate pocket. FMN contacts are provided by residues Ala-65–Thr-67, Ser-95, and Asn-124. Ser-95–His-97 contributes to the substrate binding site. Gln-154 is a substrate binding site. Glu-155 serves as a coordination point for Mg(2+). FMN contacts are provided by residues Lys-186, Ser-211, Thr-216, Gly-262–Arg-264, and Ser-283–Arg-284.

This sequence belongs to the IPP isomerase type 2 family. Homooctamer. Dimer of tetramers. The cofactor is FMN. Requires NADPH as cofactor. Mg(2+) is required as a cofactor.

The protein resides in the cytoplasm. The enzyme catalyses isopentenyl diphosphate = dimethylallyl diphosphate. Functionally, involved in the biosynthesis of isoprenoids. Catalyzes the 1,3-allylic rearrangement of the homoallylic substrate isopentenyl (IPP) to its allylic isomer, dimethylallyl diphosphate (DMAPP). In Staphylococcus haemolyticus (strain JCSC1435), this protein is Isopentenyl-diphosphate delta-isomerase.